A 169-amino-acid chain; its full sequence is Protein-export protein SecB (169 aa).

The protein belongs to the SecB family. Homotetramer, a dimer of dimers. One homotetramer interacts with 1 SecA dimer.

It is found in the cytoplasm. Its function is as follows. One of the proteins required for the normal export of preproteins out of the cell cytoplasm. It is a molecular chaperone that binds to a subset of precursor proteins, maintaining them in a translocation-competent state. It also specifically binds to its receptor SecA. In Haemophilus influenzae (strain 86-028NP), this protein is Protein-export protein SecB.